The sequence spans 474 residues: Equilibrative nucleoside transporter 3 (474 aa).

Residues 1-53 (MAIISEDDFRHTSNSTYRTASSSLRADQEALLEKLLDRPPPSLQRPEDRFNGT) lie on the Cytoplasmic side of the membrane. Residues serine 21 and serine 23 each carry the phosphoserine modification. Residues 31-32 (LL) carry the Dileucine internalization motif motif. Residues 54 to 74 (YIIFFSLGIGGLLPWNFFVTA) form a helical membrane-spanning segment. At 75-105 (QEYWIFKLSNCSSPAAGEEPKDSDILNYFES) the chain is on the extracellular side. Asparagine 84 carries an N-linked (GlcNAc...) asparagine glycan. The helical transmembrane segment at 106 to 126 (YLAVASTVPSVLCLALNFLLV) threads the bilayer. The Cytoplasmic portion of the chain corresponds to 127–134 (NRVPIRVR). A helical membrane pass occupies residues 135 to 155 (VLASLTVMLAIFIVMTVLVKV). Over 156-161 (DTSSWT) the chain is Extracellular. The helical transmembrane segment at 162–182 (HSFFTITITCMAILSGTSTIF) threads the bilayer. Topologically, residues 183 to 201 (NSSVFGMTGSFPMRNSQAL) are cytoplasmic. A helical transmembrane segment spans residues 202 to 222 (ISGGAMGGTLSAVASLVDLAV). The Extracellular segment spans residues 223-230 (ASDVTDST). Residues 231–251 (LAFFLTADIFLALCIGLYLLL) traverse the membrane as a helical segment. At 252–305 (PRLDYARYYMKPVWPTVFSGEEQLPQDSPSPTSVAPGSSDPQTPPLGPILKKTT) the chain is on the cytoplasmic side. Positions 272–294 (EEQLPQDSPSPTSVAPGSSDPQT) are disordered. Over residues 276 to 292 (PQDSPSPTSVAPGSSDP) the composition is skewed to polar residues. Residues 306–326 (GLGFCIIYLFFITSLIFPAIC) traverse the membrane as a helical segment. At 327 to 339 (TNIESLSKGSGSP) the chain is on the extracellular side. The helical transmembrane segment at 340–357 (WSTKFFVPLTTFLLYNFA) threads the bilayer. At 358 to 376 (DLCGRQVTAWIQVPGPRSK) the chain is on the cytoplasmic side. A helical transmembrane segment spans residues 377–397 (ALPGLALLRTCFVPLFVFCNY). The Extracellular portion of the chain corresponds to 398-414 (QPRGHLHTVLFQSDVYP). A helical transmembrane segment spans residues 415-435 (VLFTSLLGLSNGYLSTLALIY). The Cytoplasmic portion of the chain corresponds to 436–453 (GPKIVPRELAEATGVVMT). Residues 454-474 (FYMGLGLVLGSACSALLVHLI) traverse the membrane as a helical segment.

The protein belongs to the SLC29A/ENT transporter (TC 2.A.57) family.

It is found in the lysosome membrane. The protein localises to the late endosome membrane. It localises to the mitochondrion membrane. Its subcellular location is the cell membrane. It carries out the reaction adenosine(in) = adenosine(out). It catalyses the reaction guanosine(in) = guanosine(out). The enzyme catalyses inosine(in) = inosine(out). The catalysed reaction is uridine(out) = uridine(in). It carries out the reaction cytidine(in) = cytidine(out). It catalyses the reaction thymidine(in) = thymidine(out). The enzyme catalyses 2'-deoxyadenosine(in) = 2'-deoxyadenosine(out). The catalysed reaction is 2'-deoxycytidine(in) = 2'-deoxycytidine(out). It carries out the reaction guanine(out) = guanine(in). It catalyses the reaction uracil(in) = uracil(out). The enzyme catalyses (R)-noradrenaline(out) = (R)-noradrenaline(in). The catalysed reaction is dopamine(out) = dopamine(in). It carries out the reaction serotonin(out) = serotonin(in). It catalyses the reaction tyramine(in) = tyramine(out). The enzyme catalyses ATP(in) = ATP(out). Uniporter that mediates the facilitative transport of nucleoside across lysosomal and mitochondrial membranes. Functions as a non-electrogenic Na(+)-independent transporter. Substrate transport is pH-dependent and enhanced under acidic condition, probably reflecting the location of the transporter in acidic intracellular compartments. Proton is not a cotransporting ion but most likely change the ionization state of the transporter which dictates transport-permissible/impermissible conformation for nucleoside translocation. May direct the nucleoside transport from lysosomes to cytosol or cytosol to mitochondria to facilitate the fundamental function of salvage synthesis of nucleic acids. Involved in the transport of nucleosides (adenosine, guanosine, uridine, thymidine, cytidine and inosine) and deoxynucleosides (deoxyadenosine, deoxycytidine). Also mediates transport of purine nucleobases (adenine, guanine) and pyrimidine nucleobases (uracil). Also able to transport monoamine neurotransmitters dopamine, serotonin, noradrenaline and tyramine. Capable of transporting ATP. Mediates nucleoside export from lysosomes in macrophages, which regulates macrophage functions and numbers. The sequence is that of Equilibrative nucleoside transporter 3 (SLC29A3) from Bos taurus (Bovine).